The following is a 327-amino-acid chain: Phenylalanine--tRNA ligase alpha subunit (327 aa).

Residue E252 participates in Mg(2+) binding.

This sequence belongs to the class-II aminoacyl-tRNA synthetase family. Phe-tRNA synthetase alpha subunit type 1 subfamily. In terms of assembly, tetramer of two alpha and two beta subunits. Mg(2+) is required as a cofactor.

The protein localises to the cytoplasm. The enzyme catalyses tRNA(Phe) + L-phenylalanine + ATP = L-phenylalanyl-tRNA(Phe) + AMP + diphosphate + H(+). This Escherichia coli O127:H6 (strain E2348/69 / EPEC) protein is Phenylalanine--tRNA ligase alpha subunit.